We begin with the raw amino-acid sequence, 285 residues long: 4-diphosphocytidyl-2-C-methyl-D-erythritol kinase (285 aa).

Residue Lys-14 is part of the active site. An ATP-binding site is contributed by 97–107; sequence PMGGGIGGGSS. The active site involves Asp-139.

It belongs to the GHMP kinase family. IspE subfamily.

It catalyses the reaction 4-CDP-2-C-methyl-D-erythritol + ATP = 4-CDP-2-C-methyl-D-erythritol 2-phosphate + ADP + H(+). It functions in the pathway isoprenoid biosynthesis; isopentenyl diphosphate biosynthesis via DXP pathway; isopentenyl diphosphate from 1-deoxy-D-xylulose 5-phosphate: step 3/6. In terms of biological role, catalyzes the phosphorylation of the position 2 hydroxy group of 4-diphosphocytidyl-2C-methyl-D-erythritol. In Tolumonas auensis (strain DSM 9187 / NBRC 110442 / TA 4), this protein is 4-diphosphocytidyl-2-C-methyl-D-erythritol kinase.